A 431-amino-acid polypeptide reads, in one-letter code: Trigger factor (431 aa).

A PPIase FKBP-type domain is found at 164 to 249 (GDIAVIDFKG…IKEIKRKELP (86 aa)).

This sequence belongs to the FKBP-type PPIase family. Tig subfamily.

It localises to the cytoplasm. It catalyses the reaction [protein]-peptidylproline (omega=180) = [protein]-peptidylproline (omega=0). Functionally, involved in protein export. Acts as a chaperone by maintaining the newly synthesized protein in an open conformation. Functions as a peptidyl-prolyl cis-trans isomerase. In Clostridium acetobutylicum (strain ATCC 824 / DSM 792 / JCM 1419 / IAM 19013 / LMG 5710 / NBRC 13948 / NRRL B-527 / VKM B-1787 / 2291 / W), this protein is Trigger factor.